The sequence spans 201 residues: Dephospho-CoA kinase (201 aa).

The DPCK domain occupies 3–201 (ILGLTGGIGS…QIDSRVGCKI (199 aa)). 11–16 (GSGKSL) contributes to the ATP binding site.

This sequence belongs to the CoaE family.

The protein localises to the cytoplasm. It catalyses the reaction 3'-dephospho-CoA + ATP = ADP + CoA + H(+). The protein operates within cofactor biosynthesis; coenzyme A biosynthesis; CoA from (R)-pantothenate: step 5/5. Catalyzes the phosphorylation of the 3'-hydroxyl group of dephosphocoenzyme A to form coenzyme A. In Ehrlichia ruminantium (strain Welgevonden), this protein is Dephospho-CoA kinase.